Here is a 326-residue protein sequence, read N- to C-terminus: 4-hydroxythreonine-4-phosphate dehydrogenase (326 aa).

Positions 132 and 133 each coordinate substrate. Residues His163, His208, and His263 each coordinate a divalent metal cation. The substrate site is built by Lys271, Asn280, and Arg289.

It belongs to the PdxA family. Homodimer. Requires Zn(2+) as cofactor. Mg(2+) serves as cofactor. It depends on Co(2+) as a cofactor.

The protein localises to the cytoplasm. It carries out the reaction 4-(phosphooxy)-L-threonine + NAD(+) = 3-amino-2-oxopropyl phosphate + CO2 + NADH. It participates in cofactor biosynthesis; pyridoxine 5'-phosphate biosynthesis; pyridoxine 5'-phosphate from D-erythrose 4-phosphate: step 4/5. Catalyzes the NAD(P)-dependent oxidation of 4-(phosphooxy)-L-threonine (HTP) into 2-amino-3-oxo-4-(phosphooxy)butyric acid which spontaneously decarboxylates to form 3-amino-2-oxopropyl phosphate (AHAP). The polypeptide is 4-hydroxythreonine-4-phosphate dehydrogenase (Roseobacter denitrificans (strain ATCC 33942 / OCh 114) (Erythrobacter sp. (strain OCh 114))).